We begin with the raw amino-acid sequence, 235 residues long: Octanoyltransferase (235 aa).

The BPL/LPL catalytic domain occupies 59–235 (PGSSQAVWLL…KKSLTERFGL (177 aa)). Substrate-binding positions include 101–108 (RGGEVTHH), 168–170 (SIG), and 181–183 (GLS). The Acyl-thioester intermediate role is filled by C199.

Belongs to the LipB family.

The protein resides in the cytoplasm. It catalyses the reaction octanoyl-[ACP] + L-lysyl-[protein] = N(6)-octanoyl-L-lysyl-[protein] + holo-[ACP] + H(+). The protein operates within protein modification; protein lipoylation via endogenous pathway; protein N(6)-(lipoyl)lysine from octanoyl-[acyl-carrier-protein]: step 1/2. In terms of biological role, catalyzes the transfer of endogenously produced octanoic acid from octanoyl-acyl-carrier-protein onto the lipoyl domains of lipoate-dependent enzymes. Lipoyl-ACP can also act as a substrate although octanoyl-ACP is likely to be the physiological substrate. The protein is Octanoyltransferase of Prochlorococcus marinus (strain MIT 9211).